Reading from the N-terminus, the 64-residue chain is Putative antitoxin VapB1 (64 aa).

Its function is as follows. Possibly the antitoxin component of a type II toxin-antitoxin (TA) system. Its cognate toxin is VapC1 (Potential). The polypeptide is Putative antitoxin VapB1 (vapB1) (Methanocaldococcus jannaschii (strain ATCC 43067 / DSM 2661 / JAL-1 / JCM 10045 / NBRC 100440) (Methanococcus jannaschii)).